Here is a 174-residue protein sequence, read N- to C-terminus: Guided entry of tail-anchored proteins factor 1 (174 aa).

Residues 1–8 lie on the Lumenal side of the membrane; the sequence is MSAAEADR. Residues 9–29 form a helical membrane-spanning segment; that stretch reads WAWLLVLSFVFGCNVLRILLP. Residues 30–99 lie on the Cytoplasmic side of the membrane; sequence SFSFFMSRVL…VKARTAQLAK (70 aa). The stretch at 39-94 forms a coiled coil; that stretch reads LQKDAEQESQMRAEIQGMKQELSTVNMMDEFARYARLERKINKMTDKLKTHVKART. Residues 39-97 are interaction with GET3/TRC40; sequence LQKDAEQESQMRAEIQGMKQELSTVNMMDEFARYARLERKINKMTDKLKTHVKARTAQL. Residues 100–120 traverse the membrane as a helical segment; sequence IKWVISVAFYILQAALMVSLI. Topologically, residues 121–148 are lumenal; sequence WKYYSVPVAVVPSKWITPLDRLVAFPTR. The chain crosses the membrane as a helical span at residues 149 to 169; that stretch reads VAGGVGITCWILVCNKVVAIV. At 170 to 174 the chain is on the cytoplasmic side; the sequence is LHPFS.

It belongs to the WRB/GET1 family. Component of the Golgi to ER traffic (GET) complex, which is composed of GET1/WRB, CAMLG/GET2 and GET3. Within the complex, GET1 and CAMLG form a heterotetramer which is stabilized by phosphatidylinositol binding and which binds to the GET3 homodimer. Interacts with CAMLG (via C-terminus). GET3 shows a higher affinity for CAMLG than for GET1.

The protein resides in the endoplasmic reticulum membrane. In terms of biological role, required for the post-translational delivery of tail-anchored (TA) proteins to the endoplasmic reticulum. Together with CAMLG/GET2, acts as a membrane receptor for soluble GET3/TRC40, which recognizes and selectively binds the transmembrane domain of TA proteins in the cytosol. Required to ensure correct topology and ER insertion of CAMLG. This Bos taurus (Bovine) protein is Guided entry of tail-anchored proteins factor 1.